Here is a 645-residue protein sequence, read N- to C-terminus: Ethylene response sensor 2 (645 aa).

A run of 4 helical transmembrane segments spans residues 5 to 25 (LLVQ…VTAA), 54 to 74 (VGDF…VYFV), 86 to 106 (VVCE…LAGF), and 125 to 145 (LTGI…PLLL). Cys97 and His101 together coordinate Cu cation. The region spanning 190-346 (DRHTILYTTL…VVADQVAVAI (157 aa)) is the GAF domain. A Histidine kinase domain is found at 389–623 (MMSDAMRCPV…VFRFQLRRSM (235 aa)).

Belongs to the ethylene receptor family. Heteromer with ETR1. The cofactor is Cu cation. Autophosphorylated predominantly on Ser residues. As to expression, expressed in etiolated seedlings, leaves, roots and stems. Highly expressed in flowers, stamens, pollen cells, tapetum cells, carpels and ovules.

The protein resides in the endoplasmic reticulum membrane. In terms of biological role, ethylene receptor related to bacterial two-component regulators. Acts as a redundant negative regulator of ethylene signaling. This Arabidopsis thaliana (Mouse-ear cress) protein is Ethylene response sensor 2 (ERS2).